We begin with the raw amino-acid sequence, 145 residues long: D-aminoacyl-tRNA deacylase (145 aa).

The short motif at 137–138 (GP) is the Gly-cisPro motif, important for rejection of L-amino acids element.

Belongs to the DTD family. Homodimer.

It is found in the cytoplasm. The enzyme catalyses glycyl-tRNA(Ala) + H2O = tRNA(Ala) + glycine + H(+). The catalysed reaction is a D-aminoacyl-tRNA + H2O = a tRNA + a D-alpha-amino acid + H(+). An aminoacyl-tRNA editing enzyme that deacylates mischarged D-aminoacyl-tRNAs. Also deacylates mischarged glycyl-tRNA(Ala), protecting cells against glycine mischarging by AlaRS. Acts via tRNA-based rather than protein-based catalysis; rejects L-amino acids rather than detecting D-amino acids in the active site. By recycling D-aminoacyl-tRNA to D-amino acids and free tRNA molecules, this enzyme counteracts the toxicity associated with the formation of D-aminoacyl-tRNA entities in vivo and helps enforce protein L-homochirality. The polypeptide is D-aminoacyl-tRNA deacylase (Lactobacillus helveticus (strain DPC 4571)).